Consider the following 81-residue polypeptide: Pyruvate synthase subunit PorD (81 aa).

4Fe-4S ferredoxin-type domains are found at residues 25–50 (FKPV…GCIN) and 51–80 (REHE…MERE). The [4Fe-4S] cluster site is built by Cys34, Cys37, Cys40, Cys44, Cys60, Cys63, Cys66, and Cys70.

As to quaternary structure, heterotetramer of one alpha, one beta, one delta and one gamma chain. [4Fe-4S] cluster is required as a cofactor.

This is Pyruvate synthase subunit PorD (porD) from Methanothermobacter thermautotrophicus (strain ATCC 29096 / DSM 1053 / JCM 10044 / NBRC 100330 / Delta H) (Methanobacterium thermoautotrophicum).